A 439-amino-acid chain; its full sequence is Xylose isomerase (439 aa).

Residues His101 and Asp104 contribute to the active site. Mg(2+) contacts are provided by Glu232, Glu268, His271, Asp296, Asp307, Asp309, and Asp339.

Belongs to the xylose isomerase family. As to quaternary structure, homotetramer. It depends on Mg(2+) as a cofactor.

It localises to the cytoplasm. It carries out the reaction alpha-D-xylose = alpha-D-xylulofuranose. This Haemophilus influenzae (strain PittEE) protein is Xylose isomerase.